The sequence spans 288 residues: MKIIVPATSANIGPGFDSVGVAVSKYLTIEVLEERDEWLIEHDLNPRIPKDKRNLLIKVALQLAPNLQPYRLKMTSDIPLARGLGSSSSVIVAGIELANQLGKLDLTDDEKLDWANKIEGHPDNVAPAIFGNLVISSVFKGAVSSVRADFPECSFIAYVPKYELKTRDSRSVLPFKFSYKEAVAASSIANVAIAALLQGDLVKAGRAIESDRFHERFRQKLVREFPNIKKLAKKHGAYATYLSGAGPTIMILAPKDRAKLIQTRIEGCKYNGEVFILDVDRDGVRVEF.

79-89 (PLARGLGSSSS) is an ATP binding site.

This sequence belongs to the GHMP kinase family. Homoserine kinase subfamily.

The protein resides in the cytoplasm. It catalyses the reaction L-homoserine + ATP = O-phospho-L-homoserine + ADP + H(+). It functions in the pathway amino-acid biosynthesis; L-threonine biosynthesis; L-threonine from L-aspartate: step 4/5. Functionally, catalyzes the ATP-dependent phosphorylation of L-homoserine to L-homoserine phosphate. The protein is Homoserine kinase of Streptococcus gordonii (strain Challis / ATCC 35105 / BCRC 15272 / CH1 / DL1 / V288).